The sequence spans 192 residues: CASP-like protein 1E1 (192 aa).

The segment at 1-22 (MDSQNKNSVDAMDGIESRGMKE) is disordered. Residues 1–29 (MDSQNKNSVDAMDGIESRGMKERGGRTNS) are Cytoplasmic-facing. A helical transmembrane segment spans residues 30 to 50 (FLVLRVLAFVLTSTAAIVHGV). Over 51–81 (NNQTETVPIQLTSSMPPLYVPVVAKWHYLSA) the chain is Extracellular. Residue asparagine 52 is glycosylated (N-linked (GlcNAc...) asparagine). A helical transmembrane segment spans residues 82–102 (FVFFVVSNAIACSYAAISVML). The Cytoplasmic portion of the chain corresponds to 103 to 118 (SFCGKKSMVPIILTLD). A helical transmembrane segment spans residues 119 to 139 (LLMVALLFSSNGAATAIGVMG). Residues 140 to 161 (YKGNSHVKWNKVCNVFGKFCNQ) are Extracellular-facing. The chain crosses the membrane as a helical span at residues 162–182 (VAASVVLSLIGSIVFVLLVML). Residues 183–192 (TAFRLHNKSK) are Cytoplasmic-facing.

Belongs to the Casparian strip membrane proteins (CASP) family. Homodimer and heterodimers.

It localises to the cell membrane. This is CASP-like protein 1E1 from Ricinus communis (Castor bean).